Here is a 959-residue protein sequence, read N- to C-terminus: Isoleucine--tRNA ligase (959 aa).

The short motif at 66 to 76 (PYANGDLHIGH) is the 'HIGH' region element. Residue Glu592 participates in L-isoleucyl-5'-AMP binding. The short motif at 633-637 (KMSKS) is the 'KMSKS' region element. Residue Lys636 coordinates ATP. Zn(2+)-binding residues include Cys922, Cys925, Cys942, and Cys945.

Belongs to the class-I aminoacyl-tRNA synthetase family. IleS type 1 subfamily. In terms of assembly, monomer. The cofactor is Zn(2+).

It localises to the cytoplasm. The enzyme catalyses tRNA(Ile) + L-isoleucine + ATP = L-isoleucyl-tRNA(Ile) + AMP + diphosphate. Functionally, catalyzes the attachment of isoleucine to tRNA(Ile). As IleRS can inadvertently accommodate and process structurally similar amino acids such as valine, to avoid such errors it has two additional distinct tRNA(Ile)-dependent editing activities. One activity is designated as 'pretransfer' editing and involves the hydrolysis of activated Val-AMP. The other activity is designated 'posttransfer' editing and involves deacylation of mischarged Val-tRNA(Ile). In Ralstonia pickettii (strain 12J), this protein is Isoleucine--tRNA ligase.